Reading from the N-terminus, the 235-residue chain is Phosphatidylserine decarboxylase proenzyme (235 aa).

The Schiff-base intermediate with substrate; via pyruvic acid role is filled by S204. S204 carries the pyruvic acid (Ser); by autocatalysis modification.

Belongs to the phosphatidylserine decarboxylase family. PSD-A subfamily. In terms of assembly, heterodimer of a large membrane-associated beta subunit and a small pyruvoyl-containing alpha subunit. Pyruvate is required as a cofactor. In terms of processing, is synthesized initially as an inactive proenzyme. Formation of the active enzyme involves a self-maturation process in which the active site pyruvoyl group is generated from an internal serine residue via an autocatalytic post-translational modification. Two non-identical subunits are generated from the proenzyme in this reaction, and the pyruvate is formed at the N-terminus of the alpha chain, which is derived from the carboxyl end of the proenzyme. The post-translation cleavage follows an unusual pathway, termed non-hydrolytic serinolysis, in which the side chain hydroxyl group of the serine supplies its oxygen atom to form the C-terminus of the beta chain, while the remainder of the serine residue undergoes an oxidative deamination to produce ammonia and the pyruvoyl prosthetic group on the alpha chain.

The protein resides in the cell membrane. It carries out the reaction a 1,2-diacyl-sn-glycero-3-phospho-L-serine + H(+) = a 1,2-diacyl-sn-glycero-3-phosphoethanolamine + CO2. Its pathway is phospholipid metabolism; phosphatidylethanolamine biosynthesis; phosphatidylethanolamine from CDP-diacylglycerol: step 2/2. Catalyzes the formation of phosphatidylethanolamine (PtdEtn) from phosphatidylserine (PtdSer). The polypeptide is Phosphatidylserine decarboxylase proenzyme (Mycobacterium sp. (strain JLS)).